The chain runs to 247 residues: Uridylate kinase (247 aa).

Residue 17–20 (KFSG) participates in ATP binding. Residue G59 participates in UMP binding. ATP contacts are provided by G60 and R64. UMP contacts are provided by residues D79 and 140–147 (TGNPFFTT). ATP contacts are provided by T167, Y173, and D176.

The protein belongs to the UMP kinase family. As to quaternary structure, homohexamer.

It localises to the cytoplasm. The catalysed reaction is UMP + ATP = UDP + ADP. The protein operates within pyrimidine metabolism; CTP biosynthesis via de novo pathway; UDP from UMP (UMPK route): step 1/1. With respect to regulation, inhibited by UTP. Functionally, catalyzes the reversible phosphorylation of UMP to UDP. The sequence is that of Uridylate kinase from Legionella pneumophila (strain Paris).